The following is a 149-amino-acid chain: Proline-rich acidic protein 1 (149 aa).

Residues 1–20 (MKRFLLATCLVAALLWEAGA) form the signal peptide. Disordered stretches follow at residues 51-79 (EPLEKDNQLGPLLPEPKQKPAAAEEKRPD) and 97-122 (LQGPELDLDSIDHPMSDDVQDEEVPQ). Basic and acidic residues predominate over residues 66–79 (PKQKPAAAEEKRPD).

As to quaternary structure, interacts with MTTP. Interacts with MAD1L1. Predominantly expressed in the intestinal epithelial cells than in the liver (at protein level). Abundantly expressed in the uterus during late pregnancy by uterus epithelial cells. After birth expression rapidly decreases and is no longer found in the uterus by the third day. Also highly expressed in the small intestine where it shows a proximal-distal graded expression.

It is found in the secreted. Its subcellular location is the endoplasmic reticulum. Its function is as follows. Lipid-binding protein which promotes lipid absorption by facilitating MTTP-mediated lipid transfer (mainly triglycerides and phospholipids) and MTTP-mediated apoB lipoprotein assembly and secretion. Protects the gastrointestinal epithelium from irradiation-induced apoptosis. May play an important role in maintaining normal growth homeostasis in epithelial cells. Involved in p53/TP53-dependent cell survival after DNA damage. The polypeptide is Proline-rich acidic protein 1 (Prap1) (Mus musculus (Mouse)).